The sequence spans 290 residues: 4-diphosphocytidyl-2-C-methyl-D-erythritol kinase (290 aa).

The active site involves K10. 95–105 (PVAAGLAGGSS) is a binding site for ATP. The active site involves D137.

It belongs to the GHMP kinase family. IspE subfamily.

The enzyme catalyses 4-CDP-2-C-methyl-D-erythritol + ATP = 4-CDP-2-C-methyl-D-erythritol 2-phosphate + ADP + H(+). Its pathway is isoprenoid biosynthesis; isopentenyl diphosphate biosynthesis via DXP pathway; isopentenyl diphosphate from 1-deoxy-D-xylulose 5-phosphate: step 3/6. Functionally, catalyzes the phosphorylation of the position 2 hydroxy group of 4-diphosphocytidyl-2C-methyl-D-erythritol. This chain is 4-diphosphocytidyl-2-C-methyl-D-erythritol kinase, found in Geobacillus kaustophilus (strain HTA426).